The sequence spans 240 residues: Diglucosylglycerate octanoyltransferase (240 aa).

This sequence belongs to the OctT acyltransferase family. In terms of assembly, homotetramer.

The catalysed reaction is (2R)-2-O-[alpha-D-glucopyranosyl-(1-&gt;6)-alpha-D-glucopyranosyl]-glycerate + octanoyl-CoA = (2R)-2-O-[6-O-octanoyl-alpha-D-glucopyranosyl-(1-&gt;6)-alpha-D-glucopyranosyl]-glycerate + CoA. Its function is as follows. Sugar octanoyltransferase likely involved in the biosynthesis of mycobacterial methylglucose lipopolysaccharide (MGLP). Catalyzes the transfer of an octanoyl group from octanoyl-CoA to the C6 OH of the second glucose in diglucosylglycerate (DGG). Can also use hexanoyl-CoA as acyl donor in vitro. DGG is the preferred acceptor, but to a lesser extent, GG (glucosylglycerate) can be used as substrate. DGG and GG are the two earliest intermediates in MGLP biosynthesis. In Mycolicibacterium hassiacum (strain DSM 44199 / CIP 105218 / JCM 12690 / 3849) (Mycobacterium hassiacum), this protein is Diglucosylglycerate octanoyltransferase.